Reading from the N-terminus, the 103-residue chain is uncharacterized protein (103 aa).

This is an uncharacterized protein from Dictyostelium discoideum (Social amoeba).